The chain runs to 202 residues: dTTP/UTP pyrophosphatase (202 aa).

D71 functions as the Proton acceptor in the catalytic mechanism.

It belongs to the Maf family. YhdE subfamily. Requires a divalent metal cation as cofactor.

It localises to the cytoplasm. It catalyses the reaction dTTP + H2O = dTMP + diphosphate + H(+). The catalysed reaction is UTP + H2O = UMP + diphosphate + H(+). In terms of biological role, nucleoside triphosphate pyrophosphatase that hydrolyzes dTTP and UTP. May have a dual role in cell division arrest and in preventing the incorporation of modified nucleotides into cellular nucleic acids. This Zymomonas mobilis subsp. mobilis (strain ATCC 31821 / ZM4 / CP4) protein is dTTP/UTP pyrophosphatase.